The chain runs to 450 residues: Bifunctional apoptosis regulator (450 aa).

Positions 1–24 (MEEPQKNDLSMRGQEEDHPVRSSG) are disordered. Over 1–140 (MEEPQKNDLS…PSTGRVNQQR (140 aa)) the chain is Cytoplasmic. An RING-type zinc finger spans residues 34–74 (CHCCYDTLVNPTTLNCGHSFCRHCLALWWMSSKKTECPECR). The helical transmembrane segment at 141-161 (GGGFFSGVLTALTGVAVILLV) threads the bilayer. The Extracellular portion of the chain corresponds to 162–331 (YHWRSRESEH…REPTWKQWRE (170 aa)). An SAM domain is found at 182 to 249 (WTTEEVVLWL…LMELERVRAL (68 aa)). N-linked (GlcNAc...) asparagine glycosylation is present at N232. The helical transmembrane segment at 332-352 (FLIKYSFLPYQLIAEFAWDWL) threads the bilayer. The Cytoplasmic segment spans residues 353 to 360 (EVHYWTSR). Residues 361 to 381 (FLIVNAMLLSVLELFSFWRIW) traverse the membrane as a helical segment. The Extracellular segment spans residues 382 to 404 (SRSELKTVPQRMWSHFWKVSTQG). Residues 405–425 (LFMAMFWPLIPQFVCNCLFYW) traverse the membrane as a helical segment. Over 426–450 (ALYFNPIINIDLVVKEIRRLETQVF) the chain is Cytoplasmic.

In terms of assembly, interacts with CASP8, BCL2 and BCL2L1 through SAM domain and also with HIP1, IFT57, ESRRBL1 and BCAP31. Interacts with NGFR; this interaction inhibits NF-kappa-B and JNK-related signaling pathways. Mediates RING-dependent self-ubiquitination leading to proteasomal degradation.

The protein localises to the endoplasmic reticulum membrane. The enzyme catalyses S-ubiquitinyl-[E2 ubiquitin-conjugating enzyme]-L-cysteine + [acceptor protein]-L-lysine = [E2 ubiquitin-conjugating enzyme]-L-cysteine + N(6)-ubiquitinyl-[acceptor protein]-L-lysine.. Functionally, membrane-bound E3 ubiquitin ligase that plays a role in several processes including apoptosis regulation or reticulum endoplasmic stress. Has anti-apoptotic activity, both for apoptosis triggered via death-receptors and via mitochondrial factors. Contributes to the dynamic control of IRE1/ERN1 signaling during ER stress by inducing BAX inhibitor 1/TMBIM6 proteasomal degradation. Promotes the activation of TGF-beta signaling by mediating the 'Lys-63'-linked ubiquitination of TGFBR1 which is critical to activate the pathway. Together with NGFR, negatively regulates NF-kappa-B and JNK-related signaling pathways. Promotes the proteasome-mediated degradation of PNPLA3, a protein involveld in lipid metabolism. This is Bifunctional apoptosis regulator (Bfar) from Rattus norvegicus (Rat).